A 145-amino-acid chain; its full sequence is uncharacterized protein (145 aa).

Residues valine 97 and asparagine 121 each coordinate substrate.

This sequence belongs to the D-isomer specific 2-hydroxyacid dehydrogenase family. FDH subfamily.

This is an uncharacterized protein from Saccharomyces cerevisiae (strain ATCC 204508 / S288c) (Baker's yeast).